The primary structure comprises 620 residues: Cryptochrome-1 (620 aa).

In terms of domain architecture, Photolyase/cryptochrome alpha/beta spans 3-132; sequence VNAVHWFRKG…EVIVRISHTL (130 aa). Short sequence motifs (LIR) lie at residues 50–54, 82–87, and 151–156; these read NRWRF, DVFPRL, and KRFQTL. Serine 252 serves as a coordination point for FAD. Short sequence motifs (LIR) lie at residues 255–260, 271–276, 285–290, and 335–339; these read LRFGCL, DLYKKV, SLYGQL, and TGFPW. Glutamine 289 provides a ligand contact to FAD. FAD is bound at residue histidine 355. An LIR 8 motif is present at residues 379–384; the sequence is KVFEEL. FAD is bound at residue 387 to 389; it reads DAD. 5 consecutive short sequence motifs (LIR) follow at residues 395-400, 411-416, 430-435, 486-491, and 492-497; these read GSWMWL, HCYCPV, RRYLPV, QIYQQL, and SRYRGL. The segment at 593–620 is disordered; the sequence is TGISAGKRPNPEEETQSVGPKVQRQSTN.

Belongs to the DNA photolyase class-1 family. Component of the circadian core oscillator, which includes the CRY proteins, CLOCK or NPAS2, BMAL1 or BMAL2, CSNK1E, and the PER proteins. It depends on FAD as a cofactor. (6R)-5,10-methylene-5,6,7,8-tetrahydrofolate is required as a cofactor. In terms of tissue distribution, expressed in the retina.

The protein resides in the cytoplasm. It is found in the nucleus. In terms of biological role, transcriptional repressor which forms a core component of the circadian clock. The circadian clock, an internal time-keeping system, regulates various physiological processes through the generation of approximately 24 hour circadian rhythms in gene expression, which are translated into rhythms in metabolism and behavior. It is derived from the Latin roots 'circa' (about) and 'diem' (day) and acts as an important regulator of a wide array of physiological functions including metabolism, sleep, body temperature, blood pressure, endocrine, immune, cardiovascular, and renal function. Consists of two major components: the central clock, residing in the suprachiasmatic nucleus (SCN) of the brain, and the peripheral clocks that are present in nearly every tissue and organ system. Both the central and peripheral clocks can be reset by environmental cues, also known as Zeitgebers (German for 'timegivers'). The predominant Zeitgeber for the central clock is light, which is sensed by retina and signals directly to the SCN. The central clock entrains the peripheral clocks through neuronal and hormonal signals, body temperature and feeding-related cues, aligning all clocks with the external light/dark cycle. Circadian rhythms allow an organism to achieve temporal homeostasis with its environment at the molecular level by regulating gene expression to create a peak of protein expression once every 24 hours to control when a particular physiological process is most active with respect to the solar day. Transcription and translation of core clock components (CLOCK, NPAS2, BMAL1, BMAL2, PER1, PER2, PER3, CRY1 and CRY2) plays a critical role in rhythm generation, whereas delays imposed by post-translational modifications (PTMs) are important for determining the period (tau) of the rhythms (tau refers to the period of a rhythm and is the length, in time, of one complete cycle). A diurnal rhythm is synchronized with the day/night cycle, while the ultradian and infradian rhythms have a period shorter and longer than 24 hours, respectively. Disruptions in the circadian rhythms contribute to the pathology of cardiovascular diseases, cancer, metabolic syndromes and aging. A transcription/translation feedback loop (TTFL) forms the core of the molecular circadian clock mechanism. Transcription factors, CLOCK or NPAS2 and BMAL1 or BMAL2, form the positive limb of the feedback loop, act in the form of a heterodimer and activate the transcription of core clock genes and clock-controlled genes (involved in key metabolic processes), harboring E-box elements (5'-CACGTG-3') within their promoters. The core clock genes: PER1/2/3 and CRY1/2 which are transcriptional repressors form the negative limb of the feedback loop and interact with the CLOCK|NPAS2-BMAL1|BMAL2 heterodimer inhibiting its activity and thereby negatively regulating their own expression. This heterodimer also activates nuclear receptors NR1D1/2 and RORA/B/G, which form a second feedback loop and which activate and repress BMAL1 transcription, respectively. CRY1 and CRY2 have redundant functions but also differential and selective contributions at least in defining the pace of the SCN circadian clock and its circadian transcriptional outputs. More potent transcriptional repressor in cerebellum and liver than CRY2, though more effective in lengthening the period of the SCN oscillator. On its side, CRY2 seems to play a critical role in tuning SCN circadian period by opposing the action of CRY1. With CRY2, is dispensable for circadian rhythm generation but necessary for the development of intercellular networks for rhythm synchrony. Capable of translocating circadian clock core proteins such as PER proteins to the nucleus. Interacts with CLOCK-BMAL1 independently of PER proteins and is found at CLOCK-BMAL1-bound sites, suggesting that CRY may act as a molecular gatekeeper to maintain CLOCK-BMAL1 in a poised and repressed state until the proper time for transcriptional activation. The protein is Cryptochrome-1 (CRY1) of Erithacus rubecula (European robin).